The sequence spans 122 residues: Toxin CSTX-1 (122 aa).

The signal sequence occupies residues 1–20 (MKVLIISAVLFITIFSNISA). The propeptide occupies 21–47 (EIEDDFLEDESFEAEDIIPFFENEQAR). 4 disulfide bridges follow: Cys49–Cys64, Cys56–Cys73, Cys63–Cys91, and Cys75–Cys89. Residues 99–112 (AIETGLNIFRGLFK) are predicted alpha-helix. At Arg108 the chain carries Arginine amide; in CSTX-2a. Lys121 is modified (lysine amide; in omega-ctenitoxin-Cs1a).

The protein belongs to the neurotoxin 19 (CSTX) family. 04 (U1-Lctx) subfamily. As to quaternary structure, monomer. Interacts with CSTX-13 (AC P83919) (Kd=430 nM), but does not interact with CSTX-9 (AC P58604). As to expression, expressed by the venom gland.

The protein localises to the secreted. It localises to the target cell membrane. Its function is as follows. Spider venom toxin that shows calcium channel blocking activity and exhibits cytolytic activity by affecting the outer leaflet curvature and/or pore formation across the membrane. It blocks L-type calcium channels (Cav1/CACNA1) in mammalian neurons at nanomolar concentrations. Furthermore, it produces a slow voltage-independent block of mid/low and high voltage-activated calcium channels in cockroach neurons. Potassium ions, histamine, M-ctenitoxin-Cs1a (AC P83619), CSTX-9 (AC P58604), and CSTX-13 (AC P83919) synergistically increase the insecticidal activity of this toxin. In vivo, it causes paralysis in blow flies and provokes death in drosophila. In terms of biological role, blocks voltage-activated calcium channels (Cav). Does not induce cell membrane permeability increase when tested on Xenopus oocytes. No alpha-helical structures are detectable. Is 7-fold less neurotoxic than omega-ctenitoxin-Cs1a on drosophila flies. Blocks voltage-activated calcium channels (Cav). Is 190-fold less neurotoxic than omega-ctenitoxin-Cs1a on drosophila flies. This is Toxin CSTX-1 from Cupiennius salei (American wandering spider).